The sequence spans 213 residues: T-cell surface glycoprotein CD8 beta chain (213 aa).

The N-terminal stretch at 1-21 (MQPWLWLVFSMKLAALWSSSA) is a signal peptide. The Ig-like V-type domain maps to 22-133 (LIQTPSSLLV…KMVFGTGTKL (112 aa)). At 22–175 (LIQTPSSLLV…QKGLTCSLTT (154 aa)) the chain is on the extracellular side. N-linked (GlcNAc...) asparagine glycosylation is present at asparagine 34. Cysteine 41 and cysteine 117 are disulfide-bonded. The helical transmembrane segment at 176-196 (LSLLVVCILLLLAFLGVAVYF) threads the bilayer. Topologically, residues 197-213 (YCVRRRARIHFMKQFHK) are cytoplasmic.

As to quaternary structure, forms disulfide-linked heterodimers with CD8A at the cell surface. Interacts with CD3D; this interaction couples TCR-CD3 with CD8. Interacts with LCK. Post-translationally, palmitoylated at the cytoplasmic tail and thereby targets the heterodimer CD8A/CD8B to lipid rafts unlike CD8A homodimers.

The protein localises to the membrane. Functionally, integral membrane glycoprotein that plays an essential role in the immune response and serves multiple functions in responses against both external and internal offenses. In T-cells, functions primarily as a coreceptor for MHC class I molecule:peptide complex. The antigens presented by class I peptides are derived from cytosolic proteins while class II derived from extracellular proteins. Interacts simultaneously with the T-cell receptor (TCR) and the MHC class I proteins presented by antigen presenting cells (APCs). In turn, recruits the Src kinase LCK to the vicinity of the TCR-CD3 complex. A palmitoylation site in the cytoplasmic tail of CD8B chain contributes to partitioning of CD8 into the plasma membrane lipid rafts where signaling proteins are enriched. Once LCK recruited, it initiates different intracellular signaling pathways by phosphorylating various substrates ultimately leading to lymphokine production, motility, adhesion and activation of cytotoxic T-lymphocytes (CTLs). Additionally, plays a critical role in thymic selection of CD8+ T-cells. The protein is T-cell surface glycoprotein CD8 beta chain (Cd8b) of Mus musculus (Mouse).